The primary structure comprises 1189 residues: Putative structural protein VP1 (1189 aa).

In terms of domain architecture, PPPDE spans T981–S1187. Residues H1004 and C1147 contribute to the active site.

The protein localises to the virion. In Aedes pseudoscutellaris reovirus (isolate France) (ApRV), this protein is Putative structural protein VP1 (S1).